Consider the following 353-residue polypeptide: MTIALDKFTKDENDLFDIMDDWLRRDRFVFVGWSGLLLFPCAYFAVGGWFTGTTFVTSWYTHGLASSYLEGCNFLTAAVSTPANSLAHSLLLLWGPEAQGDFTRWCQLGGLWTFVALHGAFGLIGFMLRQFELARSVQLRPYNAIAFSGPIAVFVSVFLIYPLGQSGWFFAPSFGVAAIFRFILFFQGFHNWTLNPFHMMGVAGVLGAALLCAIHGATVENTLFEDGDGANTFRAFNPTQAEETYSMVTANRFWSQIFGVAFSNKRWLHFFMLFVPVTGLWMSALGVVGLALNLRAYDFVSQEIRAAEDPEFETFYTKNILLNEGIRAWMAAQDQPHENLIFPEEVLPRGNAL.

Thr-2 bears the N-acetylthreonine mark. Thr-2 bears the Phosphothreonine mark. A helical membrane pass occupies residues 41–61 (CAYFAVGGWFTGTTFVTSWYT). His-118 is a binding site for chlorophyll a. The helical transmembrane segment at 125 to 141 (GFMLRQFELARSVQLRP) threads the bilayer. Pheophytin a contacts are provided by Gln-130 and Asn-143. A helical transmembrane segment spans residues 153 to 166 (VFVSVFLIYPLGQS). His-198 is a binding site for chlorophyll a. A helical membrane pass occupies residues 208–228 (AALLCAIHGATVENTLFEDGD). A plastoquinone contacts are provided by His-215 and Phe-262. His-215 contributes to the Fe cation binding site. His-269 lines the Fe cation pocket. Residues 279–295 (GLWMSALGVVGLALNLR) form a helical membrane-spanning segment.

The protein belongs to the reaction center PufL/M/PsbA/D family. In terms of assembly, PSII is composed of 1 copy each of membrane proteins PsbA, PsbB, PsbC, PsbD, PsbE, PsbF, PsbH, PsbI, PsbJ, PsbK, PsbL, PsbM, PsbT, PsbX, PsbY, PsbZ, Psb30/Ycf12, at least 3 peripheral proteins of the oxygen-evolving complex and a large number of cofactors. It forms dimeric complexes. The D1/D2 heterodimer binds P680, chlorophylls that are the primary electron donor of PSII, and subsequent electron acceptors. It shares a non-heme iron and each subunit binds pheophytin, quinone, additional chlorophylls, carotenoids and lipids. There is also a Cl(-1) ion associated with D1 and D2, which is required for oxygen evolution. The PSII complex binds additional chlorophylls, carotenoids and specific lipids. serves as cofactor.

The protein resides in the plastid. It localises to the chloroplast thylakoid membrane. It catalyses the reaction 2 a plastoquinone + 4 hnu + 2 H2O = 2 a plastoquinol + O2. Its function is as follows. Photosystem II (PSII) is a light-driven water:plastoquinone oxidoreductase that uses light energy to abstract electrons from H(2)O, generating O(2) and a proton gradient subsequently used for ATP formation. It consists of a core antenna complex that captures photons, and an electron transfer chain that converts photonic excitation into a charge separation. The D1/D2 (PsbA/PsbD) reaction center heterodimer binds P680, the primary electron donor of PSII as well as several subsequent electron acceptors. D2 is needed for assembly of a stable PSII complex. This chain is Photosystem II D2 protein, found in Atropa belladonna (Belladonna).